Here is a 196-residue protein sequence, read N- to C-terminus: Imidazoleglycerol-phosphate dehydratase (196 aa).

This sequence belongs to the imidazoleglycerol-phosphate dehydratase family.

Its subcellular location is the cytoplasm. The enzyme catalyses D-erythro-1-(imidazol-4-yl)glycerol 3-phosphate = 3-(imidazol-4-yl)-2-oxopropyl phosphate + H2O. It participates in amino-acid biosynthesis; L-histidine biosynthesis; L-histidine from 5-phospho-alpha-D-ribose 1-diphosphate: step 6/9. The sequence is that of Imidazoleglycerol-phosphate dehydratase from Caulobacter vibrioides (strain ATCC 19089 / CIP 103742 / CB 15) (Caulobacter crescentus).